The sequence spans 331 residues: 7,8-didemethyl-8-hydroxy-5-deazariboflavin synthase (331 aa).

Residues 6-244 (ITFSKNAFLP…ADVAVQIPPN (239 aa)) enclose the Radical SAM core domain. Positions 20, 24, and 27 each coordinate [4Fe-4S] cluster.

Belongs to the radical SAM superfamily. CofG family. In terms of assembly, consists of two subunits, CofG and CofH. It depends on [4Fe-4S] cluster as a cofactor.

It catalyses the reaction 5-amino-5-(4-hydroxybenzyl)-6-(D-ribitylimino)-5,6-dihydrouracil + S-adenosyl-L-methionine = 7,8-didemethyl-8-hydroxy-5-deazariboflavin + 5'-deoxyadenosine + L-methionine + NH4(+) + H(+). It functions in the pathway cofactor biosynthesis; coenzyme F0 biosynthesis. Its function is as follows. Catalyzes the radical-mediated synthesis of 7,8-didemethyl-8-hydroxy-5-deazariboflavin from 5-amino-5-(4-hydroxybenzyl)-6-(D-ribitylimino)-5,6-dihydrouracil. The protein is 7,8-didemethyl-8-hydroxy-5-deazariboflavin synthase of Methanoculleus marisnigri (strain ATCC 35101 / DSM 1498 / JR1).